A 114-amino-acid polypeptide reads, in one-letter code: UPF0757 protein YmgG (114 aa).

This sequence belongs to the UPF0757 family.

In Escherichia fergusonii (strain ATCC 35469 / DSM 13698 / CCUG 18766 / IAM 14443 / JCM 21226 / LMG 7866 / NBRC 102419 / NCTC 12128 / CDC 0568-73), this protein is UPF0757 protein YmgG.